The primary structure comprises 175 residues: NADH-quinone oxidoreductase subunit I (175 aa).

2 consecutive 4Fe-4S ferredoxin-type domains span residues 69-98 and 115-144; these read KRDE…IEAA and KKFE…LDGP. Residues Cys78, Cys81, Cys84, Cys88, Cys124, Cys127, Cys130, and Cys134 each contribute to the [4Fe-4S] cluster site.

It belongs to the complex I 23 kDa subunit family. In terms of assembly, NDH-1 is composed of 14 different subunits. Subunits NuoA, H, J, K, L, M, N constitute the membrane sector of the complex. [4Fe-4S] cluster is required as a cofactor.

The protein resides in the cell inner membrane. The enzyme catalyses a quinone + NADH + 5 H(+)(in) = a quinol + NAD(+) + 4 H(+)(out). Its function is as follows. NDH-1 shuttles electrons from NADH, via FMN and iron-sulfur (Fe-S) centers, to quinones in the respiratory chain. The immediate electron acceptor for the enzyme in this species is believed to be ubiquinone. Couples the redox reaction to proton translocation (for every two electrons transferred, four hydrogen ions are translocated across the cytoplasmic membrane), and thus conserves the redox energy in a proton gradient. The sequence is that of NADH-quinone oxidoreductase subunit I from Leptospira interrogans serogroup Icterohaemorrhagiae serovar Lai (strain 56601).